The following is a 133-amino-acid chain: MVKNQAQAKKSVKRKQLKNIPSGVVHVKATFNNTIVSITDPAGNVISWASAGKVGYSGSRKSSAFAATVAAQDAAKTAMNSGLKEVEVCLKGTGAGRESAVRALISAGLVVSVIRDETPVPHNGCRPRKRRRV.

Belongs to the universal ribosomal protein uS11 family. Part of the 30S ribosomal subunit. Interacts with proteins S7 and S18. Binds to IF-3.

In terms of biological role, located on the platform of the 30S subunit, it bridges several disparate RNA helices of the 16S rRNA. Forms part of the Shine-Dalgarno cleft in the 70S ribosome. The sequence is that of Small ribosomal subunit protein uS11 from Chlamydia pneumoniae (Chlamydophila pneumoniae).